The chain runs to 561 residues: DNA mismatch repair protein MutL (561 aa).

Belongs to the DNA mismatch repair MutL/HexB family.

This protein is involved in the repair of mismatches in DNA. It is required for dam-dependent methyl-directed DNA mismatch repair. May act as a 'molecular matchmaker', a protein that promotes the formation of a stable complex between two or more DNA-binding proteins in an ATP-dependent manner without itself being part of a final effector complex. The protein is DNA mismatch repair protein MutL of Rippkaea orientalis (strain PCC 8801 / RF-1) (Cyanothece sp. (strain PCC 8801)).